Here is a 55-residue protein sequence, read N- to C-terminus: Large ribosomal subunit protein bL33 (55 aa).

This sequence belongs to the bacterial ribosomal protein bL33 family.

This Acidothermus cellulolyticus (strain ATCC 43068 / DSM 8971 / 11B) protein is Large ribosomal subunit protein bL33.